A 302-amino-acid polypeptide reads, in one-letter code: 1D-myo-inositol 2-acetamido-2-deoxy-alpha-D-glucopyranoside deacetylase (302 aa).

Zn(2+) contacts are provided by H13, D16, and H155.

It belongs to the MshB deacetylase family. The cofactor is Zn(2+).

The catalysed reaction is 1D-myo-inositol 2-acetamido-2-deoxy-alpha-D-glucopyranoside + H2O = 1D-myo-inositol 2-amino-2-deoxy-alpha-D-glucopyranoside + acetate. Its function is as follows. Catalyzes the deacetylation of 1D-myo-inositol 2-acetamido-2-deoxy-alpha-D-glucopyranoside (GlcNAc-Ins) in the mycothiol biosynthesis pathway. This Nocardioides sp. (strain ATCC BAA-499 / JS614) protein is 1D-myo-inositol 2-acetamido-2-deoxy-alpha-D-glucopyranoside deacetylase.